A 35-amino-acid polypeptide reads, in one-letter code: Mu-theraphotoxin-Hd1a (35 aa).

Cystine bridges form between cysteine 2-cysteine 17, cysteine 9-cysteine 24, and cysteine 16-cysteine 31.

This sequence belongs to the neurotoxin 10 (Hwtx-1) family. 22 (Htx-4) subfamily. In terms of tissue distribution, expressed by the venom gland.

It is found in the secreted. In terms of biological role, gating-modifier toxin that reversibly and voltage-independently inhibits human Nav1.1/SCN1A and Nav1.7/SCN9A (IC(50)=111 nM). It also shows moderate inhibition on Nav1.2/SCN2A (1 uM inhibits current by 55%), Nav1.6/SCN8A (31%), Nav1.3/SCN5A (27%) and Nav1.4/SCN4A (23%). This toxin inhibits Nav1.7/SCN9A by interacting with the S3b-S4 paddle motif in channel domain II. This Cyriopagopus doriae (Tarantula spider) protein is Mu-theraphotoxin-Hd1a.